Consider the following 477-residue polypeptide: MQNFEVIIGIEVHTALNTKTKMFSNTPTSHKSMANTLINEIDLALPGTLPSVNQEVVHKGLFLANALHMHTNHQFIAFDRKHYYYLDLPKGYQITQNYFPIGQNGYIQITDENNNPKKIRIKQIHLEEDTAKQTSVNNQVYLDYNRAGWPLIEIVSEADLRSAQETVLFLEELRKILLFNDISDAKMEDGSLRVDVNISIRPRGAKSFGTKVEIKNINSISNVAKAINYEYNRQLNLILLNQSVEQQTRRFDDSTNTTVFMRSKNDAINYRYIRELNIAPIYLSDEYVSQLLSTKPYSINDLRQELLQKGLVSSAIEQLLGDGPLFKAFKYVNKIVNNPSSVYKWLCLEFIGLINKNTQIIEDISMELLQKIGAMIVLFDQTLINGKQTKTILEKIYLTNKDPQTLIKELGFEQITDENEITNLWNQILANNQEMLLQYEERPDRVEKFFMGEMMKLTKAQANPTISFNILKKILQK.

This sequence belongs to the GatB/GatE family. GatB subfamily. As to quaternary structure, heterotrimer of A, B and C subunits.

The catalysed reaction is L-glutamyl-tRNA(Gln) + L-glutamine + ATP + H2O = L-glutaminyl-tRNA(Gln) + L-glutamate + ADP + phosphate + H(+). It carries out the reaction L-aspartyl-tRNA(Asn) + L-glutamine + ATP + H2O = L-asparaginyl-tRNA(Asn) + L-glutamate + ADP + phosphate + 2 H(+). Allows the formation of correctly charged Asn-tRNA(Asn) or Gln-tRNA(Gln) through the transamidation of misacylated Asp-tRNA(Asn) or Glu-tRNA(Gln) in organisms which lack either or both of asparaginyl-tRNA or glutaminyl-tRNA synthetases. The reaction takes place in the presence of glutamine and ATP through an activated phospho-Asp-tRNA(Asn) or phospho-Glu-tRNA(Gln). The polypeptide is Aspartyl/glutamyl-tRNA(Asn/Gln) amidotransferase subunit B (Ureaplasma urealyticum serovar 10 (strain ATCC 33699 / Western)).